The sequence spans 266 residues: Putative carbamate hydrolase RutD (266 aa).

Residues 14 to 116 (PVVVLISGLG…VLVSVNGWLR (103 aa)) enclose the AB hydrolase-1 domain.

The protein belongs to the AB hydrolase superfamily. Hydrolase RutD family.

The enzyme catalyses carbamate + 2 H(+) = NH4(+) + CO2. Its function is as follows. Involved in pyrimidine catabolism. May facilitate the hydrolysis of carbamate, a reaction that can also occur spontaneously. This Escherichia coli O81 (strain ED1a) protein is Putative carbamate hydrolase RutD.